A 783-amino-acid chain; its full sequence is Rabenosyn-5 (783 aa).

A2 is modified (N-acetylalanine). The residue at position 3 (S3) is a Phosphoserine. The C2H2-type zinc finger occupies 14 to 37 (FLCPLCLKDLQSFYQLQSHYEEEH). Residues 99-262 (RSHLSDFKKH…HCKDKLLKRE (164 aa)) are necessary for the correct targeting to endosomes. An FYVE-type zinc finger spans residues 156 to 259 (DQDVPFCPDC…CCTHCKDKLL (104 aa)). The Zn(2+) site is built by C162, C165, C178, C181, C186, and C189. Positions 206–223 (KDSLSTHTSPSQSPNSVH) are enriched in polar residues. The tract at residues 206–240 (KDSLSTHTSPSQSPNSVHGSRRGSISSMSSVSSVL) is disordered. Phosphoserine is present on residues S214, S218, S225, and S229. Low complexity predominate over residues 227–239 (RGSISSMSSVSSV). Positions 251 and 254 each coordinate Zn(2+). Residues 263-499 (QQMDEKEHTP…QLQDEYDQQQ (237 aa)) are necessary for interaction with RAB4A. The interval 263-783 (QQMDEKEHTP…TLAKQKGAPN (521 aa)) is necessary for interaction with EHD1. 2 coiled-coil regions span residues 377-412 (TKEQFEELKKKRKQDLEQKRTVERQAALESRRKLEE) and 471-531 (QAKA…ELER). Basic and acidic residues-rich tracts occupy residues 387–399 (KRKQDLEQKRTVE) and 405–414 (ESRRKLEERQ). The tract at residues 387–433 (KRKQDLEQKRTVERQAALESRRKLEERQSGLASHTANGDVRSLRGIP) is disordered. The UIM domain maps to 495–514 (YDQQQTEKAIELSRKQAEEE). Disordered stretches follow at residues 569–638 (SYSL…SPTE) and 663–733 (FEED…EEHI). 2 stretches are compositionally biased toward polar residues: residues 571 to 584 (SLDQDSSPVQSSTA) and 610 to 623 (TLPQSTMSQQSDKA). Residues 627–783 (PFDEDDLSSP…TLAKQKGAPN (157 aa)) form a necessary for interaction with RAB5A region. Residues 663 to 673 (FEEDAEEEEVA) are compositionally biased toward acidic residues. S686 bears the Phosphoserine mark. The segment covering 721-733 (VDSDSGMEAEEHI) has biased composition (acidic residues).

Interacts with EHD1, RAB4A, RAB5A, RAB22A, RAB24 and VPS45. Binds simultaneously to RAB4A and RAB5A in vitro. Interacts with RAB4A and RAB5A that has been activated by GTP binding.

It localises to the cell membrane. Its subcellular location is the early endosome membrane. Functionally, rab4/Rab5 effector protein acting in early endocytic membrane fusion and membrane trafficking of recycling endosomes. Required for endosome fusion either homotypically or with clathrin coated vesicles. Plays a role in the lysosomal trafficking of CTSD/cathepsin D from the Golgi to lysosomes. Also promotes the recycling of transferrin directly from early endosomes to the plasma membrane. Binds phospholipid vesicles containing phosphatidylinositol 3-phosphate (PtdInsP3). Plays a role in the recycling of transferrin receptor to the plasma membrane. The sequence is that of Rabenosyn-5 from Mus musculus (Mouse).